The sequence spans 150 residues: Ribonuclease K6 (150 aa).

Residues 1 to 23 (MVLCFPLLLLLLVLWGPVCPLHA) form the signal peptide. Catalysis depends on His-38, which acts as the Proton acceptor. 4 disulfide bridges follow: Cys-46-Cys-104, Cys-60-Cys-114, Cys-78-Cys-129, and Cys-85-Cys-92. A glycan (N-linked (GlcNAc...) asparagine) is linked at Asn-55. Residues 61–65 (KHQNT) and Lys-86 contribute to the substrate site. The N-linked (GlcNAc...) asparagine glycan is linked to Asn-100. Position 105 (Arg-105) interacts with substrate. The Proton donor role is filled by His-145.

Belongs to the pancreatic ribonuclease family. Interacts (via N-terminus) with bacterial lipopolysaccharide (LPS).

The protein localises to the secreted. The protein resides in the lysosome. It localises to the cytoplasmic granule. In terms of biological role, ribonuclease which shows a preference for the pyrimidines uridine and cytosine. Has potent antibacterial activity against a range of Gram-positive and Gram-negative bacteria, including P.aeruginosa, A.baumanii, M.luteus, S.aureus, E.faecalis, E.faecium, S.saprophyticus and E.coli. Causes loss of bacterial membrane integrity, and also promotes agglutination of Gram-negative bacteria. Probably contributes to urinary tract sterility. Bactericidal activity is independent of RNase activity. This is Ribonuclease K6 (RNASE6) from Pongo pygmaeus (Bornean orangutan).